Reading from the N-terminus, the 164-residue chain is Putative 4-hydroxy-4-methyl-2-oxoglutarate aldolase (164 aa).

Residues 75 to 78 and arginine 97 contribute to the substrate site; that span reads GDML. Aspartate 98 is a binding site for a divalent metal cation.

It belongs to the class II aldolase/RraA-like family. Homotrimer. Requires a divalent metal cation as cofactor.

It catalyses the reaction 4-hydroxy-4-methyl-2-oxoglutarate = 2 pyruvate. The catalysed reaction is oxaloacetate + H(+) = pyruvate + CO2. Its function is as follows. Catalyzes the aldol cleavage of 4-hydroxy-4-methyl-2-oxoglutarate (HMG) into 2 molecules of pyruvate. Also contains a secondary oxaloacetate (OAA) decarboxylase activity due to the common pyruvate enolate transition state formed following C-C bond cleavage in the retro-aldol and decarboxylation reactions. This Hahella chejuensis (strain KCTC 2396) protein is Putative 4-hydroxy-4-methyl-2-oxoglutarate aldolase.